The following is a 278-amino-acid chain: Dehydrogenase/reductase SDR family member 4 (278 aa).

Position 36–60 (36–60) interacts with NADP(+); it reads LVTASTDGIGFAIARRLAQDGAHVV. Residue lysine 92 is modified to N6-acetyllysine; alternate. The residue at position 92 (lysine 92) is an N6-succinyllysine; alternate. Lysine 105 carries the N6-acetyllysine modification. Phosphoserine is present on isoleucine 140. Serine 169 lines the substrate pocket. The active-site Proton acceptor is tyrosine 182. Position 186 (lysine 186) interacts with NADP(+). Lysine 216 bears the N6-acetyllysine; alternate mark. An N6-succinyllysine; alternate modification is found at lysine 216. Position 220 is a phosphoserine (serine 220). 2 positions are modified to N6-succinyllysine: lysine 227 and lysine 234. Positions 276-278 match the Peroxisomal targeting signal motif; the sequence is SRL.

The protein belongs to the short-chain dehydrogenases/reductases (SDR) family. As to quaternary structure, homotetramer. As to expression, predominantly expressed in normal cervix (at protein level). Expressed in some neoplastic cervical tissues, but not in normal cervix (at protein level). In terms of tissue distribution, expressed in a few neoplastic cervical tissues. As to expression, high expression in liver.

It localises to the peroxisome. The protein resides in the nucleus. The enzyme catalyses a secondary alcohol + NADP(+) = a ketone + NADPH + H(+). It carries out the reaction 3beta-hydroxy-5beta-pregnane-20-one + NADP(+) = 5beta-pregnan-3,20-dione + NADPH + H(+). It catalyses the reaction 5beta-dihydrotestosterone + NADPH + H(+) = 5beta-androstane-3beta,17beta-diol + NADP(+). The catalysed reaction is 5beta-androstane-3,17-dione + NADPH + H(+) = 3beta-hydroxy-5beta-androstane-17-one + NADP(+). The enzyme catalyses isatin + NADPH + H(+) = 3-hydroxyindolin-2-one + NADP(+). It carries out the reaction lithocholate + NADP(+) = 3-oxo-5beta-cholan-24-oate + NADPH + H(+). It catalyses the reaction 3-oxo-5beta-cholan-24-oate + NADPH + H(+) = isolithocholate + NADP(+). With respect to regulation, inhibited by flavonoids (quercetin and genistein), cetylpyridium chloride, phenylhexane and valproic acid. Low inhibition is observed with fatty acids (myristic acid and lauric acid). No significant inhibition is observed with barbital, dicumarol, indomethacin, metyrapone, ethacrynic acid, disulfiram, hexestrol and benzodiazepines (diazepam and nitrazepam). Functionally, NADPH-dependent oxidoreductase which catalyzes the reduction of a variety of compounds bearing carbonyl groups including ketosteroids, alpha-dicarbonyl compounds, aldehydes, aromatic ketones and quinones. Reduces 3-ketosteroids and benzil into 3beta-hydroxysteroids and R-benzoin, respectively, in contrast to the stereoselectivity of non-primate DHRS4s which produce 3alpha-hydroxysteroids and S-benzoin. Diplays low activity toward all-trans-retinal and no activity toward 9-cis-retinal as compared to non-primate mammals. In the reverse reaction, catalyze the NAD-dependent oxidation of 3beta-hydroxysteroids and alcohol, but with much lower efficiency. Involved in the metabolism of 3beta-hydroxysteroids, isatin and xenobiotic carbonyl compounds. Its function is as follows. No detected catalytic activity in vitro, possibly due to the lack of catalytic site. In terms of biological role, NADPH-dependent oxidoreductase which catalyzes the reduction of a variety of compounds bearing carbonyl groups including ketosteroids, alpha-dicarbonyl compounds, aldehydes, aromatic ketones and quinones. Involved in the metabolism of 3beta-hydroxysteroids, isatin and xenobiotic carbonyl compounds. Has a higher catalytic activity for xenobiotic alpha-dicarbonyl compounds, sucha as benzil, than isoform 1 and is involved in benzil detoxification. This chain is Dehydrogenase/reductase SDR family member 4, found in Homo sapiens (Human).